The primary structure comprises 277 residues: Carbonyl reductase [NADPH] 1 (277 aa).

NADP(+) is bound by residues 10-34 (VTGA…GDVL), 63-64 (DI), and N90. S30 bears the Phosphoserine mark. Glutathione contacts are provided by residues 95–97 (FKM) and Q106. S140 is a binding site for substrate. Residue 193-194 (AY) coordinates glutathione. The active-site Proton acceptor is Y194. NADP(+)-binding positions include 194-198 (YGVTK) and 231-233 (VRT).

This sequence belongs to the short-chain dehydrogenases/reductases (SDR) family. In terms of assembly, monomer. In terms of tissue distribution, present in liver and kidney.

The protein resides in the cytoplasm. It carries out the reaction a secondary alcohol + NADP(+) = a ketone + NADPH + H(+). The catalysed reaction is prostaglandin F2alpha + NADP(+) = prostaglandin E2 + NADPH + H(+). The enzyme catalyses prostaglandin E1 + NADP(+) = 15-oxoprostaglandin E1 + NADPH + H(+). It catalyses the reaction menadione + NADPH + H(+) = menadiol + NADP(+). It carries out the reaction prostaglandin D2 + NADP(+) = 15-oxoprostaglandin D2 + NADPH + H(+). The catalysed reaction is prostaglandin E2 + NADP(+) = 15-oxoprostaglandin E2 + NADPH + H(+). The enzyme catalyses prostaglandin F2alpha + NADP(+) = 15-oxoprostaglandin F2alpha + NADPH + H(+). It catalyses the reaction daunorubicin + NADPH + H(+) = 13-dihydrodaunorubicin + NADP(+). It carries out the reaction S-nitrosoglutathione + NADPH + H(+) = S-(hydroxysulfenamide)glutathione + NADP(+). The catalysed reaction is a primary alcohol + NADP(+) = an aldehyde + NADPH + H(+). The enzyme catalyses cortisol + NADPH + H(+) = 20beta-dihydrocortisol + NADP(+). It catalyses the reaction corticosterone + NADPH + H(+) = 20beta-dihydrocorticosterone + NADP(+). NADPH-dependent reductase with broad substrate specificity. Catalyzes the reduction of a wide variety of carbonyl compounds including quinones, prostaglandins, menadione, plus various xenobiotics. Catalyzes the reduction of the antitumor anthracyclines doxorubicin and daunorubicin to the cardiotoxic compounds doxorubicinol and daunorubicinol. Can convert prostaglandin E to prostaglandin F2-alpha. Can bind glutathione, which explains its higher affinity for glutathione-conjugated substrates. Catalyzes the reduction of S-nitrosoglutathione. In addition, participates in the glucocorticoid metabolism by catalyzing the NADPH-dependent cortisol/corticosterone into 20beta-dihydrocortisol (20b-DHF) or 20beta-corticosterone (20b-DHB), which are weak agonists of NR3C1 and NR3C2 in adipose tissue. The sequence is that of Carbonyl reductase [NADPH] 1 from Oryctolagus cuniculus (Rabbit).